A 173-amino-acid polypeptide reads, in one-letter code: Probable xanthine dehydrogenase subunit E (173 aa).

In terms of domain architecture, 2Fe-2S ferredoxin-type spans 14–90 (EQFRMTVNGQ…GHSITTIEGL (77 aa)). [2Fe-2S] cluster-binding residues include Cys52, Cys57, Cys60, Cys72, Cys110, Cys113, Cys145, and Cys147.

As to quaternary structure, could be composed of four subunits: PucA, PucC, PucD and PucE. The cofactor is [2Fe-2S] cluster.

It catalyses the reaction xanthine + NAD(+) + H2O = urate + NADH + H(+). It carries out the reaction hypoxanthine + NAD(+) + H2O = xanthine + NADH + H(+). Its pathway is purine metabolism; hypoxanthine degradation; urate from hypoxanthine: step 1/2. It participates in purine metabolism; hypoxanthine degradation; urate from hypoxanthine: step 2/2. Its function is as follows. Oxidizes hypoxanthine and xanthine to uric acid. The sequence is that of Probable xanthine dehydrogenase subunit E (pucE) from Bacillus subtilis (strain 168).